Here is a 321-residue protein sequence, read N- to C-terminus: Gap junction delta-2 protein (321 aa).

Topologically, residues 1–19 (MGEWTILERLLEAAVQQHS) are cytoplasmic. A helical transmembrane segment spans residues 20-42 (TMIGRILLTVVVIFRILIVAIVG). The Extracellular segment spans residues 43–75 (ETVYDDEQTMFVCNTLQPGCNQACYDRAFPISH). The chain crosses the membrane as a helical span at residues 76 to 98 (IRYWVFQIIMVCTPSLCFITYSV). Over 99–197 (HQSAKQRERR…KLRRQEGISR (99 aa)) the chain is Cytoplasmic. Residues 117–141 (DRDPPESMGGPGGTGGGGSGGGKRE) form a disordered region. Residues 125 to 137 (GGPGGTGGGGSGG) show a composition bias toward gly residues. Residues 198–220 (FYIIQVVFRNALEIGFLVGQYFL) traverse the membrane as a helical segment. The Extracellular segment spans residues 221–252 (YGFSVPGLYECDRYPCIKEVECYVSRPTEKTV). Residues 253-275 (FLVFMFAVSGICVVLNLAELNHL) form a helical membrane-spanning segment. The Cytoplasmic segment spans residues 276–321 (GWRKIKLAVRGAQAKRKSVYEIRNKDLPRVSVPNFGRTQSSDSAYV).

The protein belongs to the connexin family. Delta-type subfamily. A connexon is composed of a hexamer of connexins.

It localises to the cell membrane. The protein resides in the cell junction. The protein localises to the gap junction. Its function is as follows. One gap junction consists of a cluster of closely packed pairs of transmembrane channels, the connexons, through which materials of low MW diffuse from one cell to a neighboring cell. The sequence is that of Gap junction delta-2 protein (GJD2) from Bos taurus (Bovine).